Consider the following 497-residue polypeptide: Glucose-6-phosphate 1-dehydrogenase (497 aa).

NADP(+) contacts are provided by residues 17 to 24 (GASGDLAK), R51, and K151. D-glucose 6-phosphate-binding positions include K151, 181–185 (HYLGK), E219, and D238. H243 functions as the Proton acceptor in the catalytic mechanism. K334 contacts NADP(+). Positions 337 and 342 each coordinate D-glucose 6-phosphate. Residues K343, R347, and R371 each coordinate NADP(+). Q373 serves as a coordination point for D-glucose 6-phosphate. NADP(+) is bound by residues 379–381 (YLK), 399–401 (DLS), R465, and W487.

The protein belongs to the glucose-6-phosphate dehydrogenase family.

It is found in the cytoplasm. The protein resides in the cytosol. It catalyses the reaction D-glucose 6-phosphate + NADP(+) = 6-phospho-D-glucono-1,5-lactone + NADPH + H(+). It functions in the pathway carbohydrate degradation; pentose phosphate pathway; D-ribulose 5-phosphate from D-glucose 6-phosphate (oxidative stage): step 1/3. Functionally, cytosolic glucose-6-phosphate dehydrogenase that catalyzes the first and rate-limiting step of the oxidative branch within the pentose phosphate pathway/shunt, an alternative route to glycolysis for the dissimilation of carbohydrates and a major source of reducing power and metabolic intermediates for fatty acid and nucleic acid biosynthetic processes. This chain is Glucose-6-phosphate 1-dehydrogenase (g6pd-1), found in Dictyostelium discoideum (Social amoeba).